Consider the following 159-residue polypeptide: Protein Smg homolog (159 aa).

The protein belongs to the Smg family.

The sequence is that of Protein Smg homolog from Vibrio vulnificus (strain CMCP6).